Consider the following 204-residue polypeptide: Lymphotoxin-alpha (204 aa).

The first 33 residues, 1 to 33, serve as a signal peptide directing secretion; the sequence is MTPPGRLYLRRVCSTPILLLLGLLLALPPEAQG. A THD domain is found at 62–204; it reads PAAHLVGDPS…SSVFFGAFAL (143 aa). Asn-95 carries N-linked (GlcNAc...) asparagine glycosylation. Cys-119 and Cys-155 are joined by a disulfide.

It belongs to the tumor necrosis factor family. As to quaternary structure, homotrimer, and heterotrimer of either two LTB and one LTA subunits or (less prevalent) two LTA and one LTB subunits. Interacts with TNFRSF14.

The protein localises to the secreted. It localises to the membrane. Cytokine that in its homotrimeric form binds to TNFRSF1A/TNFR1, TNFRSF1B/TNFBR and TNFRSF14/HVEM. In its heterotrimeric form with LTB binds to TNFRSF3/LTBR. Lymphotoxin is produced by lymphocytes and is cytotoxic for a wide range of tumor cells in vitro and in vivo. This chain is Lymphotoxin-alpha (LTA), found in Sus scrofa (Pig).